The primary structure comprises 312 residues: tRNA dimethylallyltransferase (312 aa).

Residue 11–18 (GATATGKT) coordinates ATP. 13-18 (TATGKT) serves as a coordination point for substrate. Residues 36-39 (DSRQ) form an interaction with substrate tRNA region.

The protein belongs to the IPP transferase family. In terms of assembly, monomer. It depends on Mg(2+) as a cofactor.

It carries out the reaction adenosine(37) in tRNA + dimethylallyl diphosphate = N(6)-dimethylallyladenosine(37) in tRNA + diphosphate. Its function is as follows. Catalyzes the transfer of a dimethylallyl group onto the adenine at position 37 in tRNAs that read codons beginning with uridine, leading to the formation of N6-(dimethylallyl)adenosine (i(6)A). The polypeptide is tRNA dimethylallyltransferase (Thermosynechococcus vestitus (strain NIES-2133 / IAM M-273 / BP-1)).